A 375-amino-acid polypeptide reads, in one-letter code: Growth/differentiation factor 8 (375 aa).

Positions 1–18 (MQKLQISVYIYLFMLIVA) are cleaved as a signal peptide. A propeptide spanning residues 19 to 266 (GPVDLNENSE…VTDTPKRSRR (248 aa)) is cleaved from the precursor. 2 N-linked (GlcNAc...) asparagine glycosylation sites follow: Asn47 and Asn71. 4 cysteine pairs are disulfide-bonded: Cys272–Cys282, Cys281–Cys340, Cys309–Cys372, and Cys313–Cys374.

The protein belongs to the TGF-beta family. As to quaternary structure, homodimer; disulfide-linked. Interacts with WFIKKN2, leading to inhibit its activity. Interacts with FSTL3. Post-translationally, synthesized as large precursor molecule that undergoes proteolytic cleavage to generate an N-terminal propeptide and a disulfide linked C-terminal dimer, which is the biologically active molecule. The circulating form consists of a latent complex of the C-terminal dimer and other proteins, including its propeptide, which maintain the C-terminal dimer in a latent, inactive state. Ligand activation requires additional cleavage of the prodomain by a tolloid-like metalloproteinase.

Its subcellular location is the secreted. Its function is as follows. Acts specifically as a negative regulator of skeletal muscle growth. In Bos gaurus (Seladang), this protein is Growth/differentiation factor 8 (MSTN).